Consider the following 1895-residue polypeptide: Diacylglycerol kinase eta (1895 aa).

Positions 1–10 are enriched in basic and acidic residues; it reads MAHLKLDTLH. Residues 1-37 are disordered; that stretch reads MAHLKLDTLHVQRSPRGSRRSSPSSGRSSACSSGSIS. Residues 20–37 are compositionally biased toward low complexity; sequence RSSPSSGRSSACSSGSIS. One can recognise a PH domain in the interval 82–175; that stretch reads AIIKEGFLLK…WLGSLKTATA (94 aa). 2 Phorbol-ester/DAG-type zinc fingers span residues 195–245 and 267–318; these read HHHW…IANC and PHQW…AVAC. The DAGKc domain occupies 349–485; the sequence is GNFSPLLVFV…DRWSIMVFEK (137 aa). Disordered regions lie at residues 781 to 801, 1012 to 1053, 1113 to 1137, and 1172 to 1191; these read ANID…ENTP, TTLC…MARL, QHRG…GANL, and PNTI…HGQD. The segment covering 1113 to 1128 has biased composition (basic and acidic residues); it reads QHRGGDNDSDYPEHEQ. The span at 1172–1184 shows a compositional bias: polar residues; the sequence is PNTILTTSTSPTK. The 64-residue stretch at 1832 to 1895 folds into the SAM domain; that stretch reads WSVNEVVTWL…LQAIKDLSEN (64 aa).

This sequence belongs to the eukaryotic diacylglycerol kinase family.

It localises to the cytoplasm. The enzyme catalyses a 1,2-diacyl-sn-glycerol + ATP = a 1,2-diacyl-sn-glycero-3-phosphate + ADP + H(+). In terms of biological role, phosphorylates diacylglycerol (DAG) to generate phosphatidic acid (PA). This is Diacylglycerol kinase eta from Drosophila melanogaster (Fruit fly).